We begin with the raw amino-acid sequence, 236 residues long: Rho-related GTP-binding protein RhoV (236 aa).

Residues 1–27 are disordered; sequence MPPRELSEAEPPPLRAPTPPPRRRSAP. Residues 10–20 show a composition bias toward pro residues; it reads EPPPLRAPTPP. Position 25 is a phosphoserine (Ser25). Residues 38–45, 85–89, and 143–146 contribute to the GTP site; these read GDGAVGKS, DTAGQ, and TQAD. The S-palmitoyl cysteine moiety is linked to residue Cys234.

Belongs to the small GTPase superfamily. Rho family. In terms of assembly, interacts with PAK2. Requires Mg(2+) as cofactor. In terms of tissue distribution, highly expressed in pancreas, placenta, and fetal brain.

It is found in the cell membrane. The protein resides in the endosome membrane. In terms of biological role, plays a role in the control of the actin cytoskeleton via activation of the JNK pathway. This chain is Rho-related GTP-binding protein RhoV, found in Homo sapiens (Human).